We begin with the raw amino-acid sequence, 678 residues long: SPS-sensor component PTR3 (678 aa).

2 disordered regions span residues 111 to 158 (TGQG…SDPT) and 179 to 211 (ANTEVGSDHPLTTGTTRDQEEHTTKENYSSSLL). A compositionally biased stretch (low complexity) spans 127–144 (TSPSSSSLSLTPSRSSST). Positions 149–158 (ADNKTLSDPT) are enriched in basic and acidic residues. A compositionally biased stretch (polar residues) spans 179–194 (ANTEVGSDHPLTTGTT).

Homodimer. Component of the plasma membrane SPS (SSY1-PTR3-SSY5) amino acid sensor complex. Interacts directly with SSY1 and SSY5. In terms of processing, hyperphosphorylated in response to extracellular amino acids and dependent on the amino acid sensor component SSY1. Phosphorylation is positively regulated by casein kinases YCK1 and YCK2, and negatively regulated by phosphatase PP2A regulatory subunit RTS1.

It is found in the cell membrane. Component of the SPS-sensor system, which regulates the expression of several amino acid-metabolizing enzymes and amino acid- and peptide-permeases in response to extracellular amino acid levels by controlling the activity of two transcription factors, STP1 and STP2. In Saccharomyces cerevisiae (strain ATCC 204508 / S288c) (Baker's yeast), this protein is SPS-sensor component PTR3 (PTR3).